Here is a 257-residue protein sequence, read N- to C-terminus: Imidazole glycerol phosphate synthase subunit HisF (257 aa).

Active-site residues include aspartate 11 and aspartate 130.

Belongs to the HisA/HisF family. In terms of assembly, heterodimer of HisH and HisF.

The protein localises to the cytoplasm. The enzyme catalyses 5-[(5-phospho-1-deoxy-D-ribulos-1-ylimino)methylamino]-1-(5-phospho-beta-D-ribosyl)imidazole-4-carboxamide + L-glutamine = D-erythro-1-(imidazol-4-yl)glycerol 3-phosphate + 5-amino-1-(5-phospho-beta-D-ribosyl)imidazole-4-carboxamide + L-glutamate + H(+). Its pathway is amino-acid biosynthesis; L-histidine biosynthesis; L-histidine from 5-phospho-alpha-D-ribose 1-diphosphate: step 5/9. IGPS catalyzes the conversion of PRFAR and glutamine to IGP, AICAR and glutamate. The HisF subunit catalyzes the cyclization activity that produces IGP and AICAR from PRFAR using the ammonia provided by the HisH subunit. The sequence is that of Imidazole glycerol phosphate synthase subunit HisF from Shewanella baltica (strain OS223).